Here is an 816-residue protein sequence, read N- to C-terminus: Protein kinase C-binding protein NELL2 (816 aa).

The first 21 residues, 1–21, serve as a signal peptide directing secretion; that stretch reads MESRVLLRTFCLIFGLGAVWG. N-linked (GlcNAc...) asparagine glycosylation is found at N53, N225, N293, and N298. The 165-residue stretch at 64–228 folds into the Laminin G-like domain; sequence PRSIKASTAT…AQCPDLNRTC (165 aa). The VWFC 1 domain occupies 272-331; it reads RTCTMKGTTYREFESWIDGCKNCTCLNGTIQCETLICPNPDCPLKSALAYVDGKCCKECK. The EGF-like 1 domain occupies 397–439; that stretch reads GYDFCSERHNCMENSICRNLNDRAVCSCRDGFRALREDNAYCE. Intrachain disulfides connect C401-C413, C407-C422, and C424-C438. Ca(2+) is bound by residues D440, I441, and E443. Residues 440-481 enclose the EGF-like 2; calcium-binding domain; that stretch reads DIDECAEGRHYCRENTMCVNTPGSFMCICKTGYIRIDDYSCT. Cystine bridges form between C444–C457, C451–C466, C468–C480, C486–C499, C493–C508, C510–C521, C525–C535, C529–C541, and C543–C552. 3 residues coordinate Ca(2+): N459, T460, and S463. Positions 482-522 constitute an EGF-like 3; calcium-binding domain; that stretch reads EHDECITNQHNCDENALCFNTVGGHNCVCKPGYTGNGTTCK. Residue N517 is glycosylated (N-linked (GlcNAc...) asparagine). The EGF-like 4 domain occupies 523 to 553; that stretch reads AFCKDGCRNGGACIAANVCACPQGFTGPSCE. Residue T548 is glycosylated (O-linked (GlcNAc...) threonine). Ca(2+) is bound by residues D555, I556, and E558. Positions 555–601 constitute an EGF-like 5; calcium-binding domain; the sequence is DIDECSDGFVQCDSRANCINLPGWYHCECRDGYHDNGMFSPSGESCE. 3 disulfides stabilise this stretch: C559/C572, C566/C581, and C583/C600. Ca(2+) contacts are provided by N574, L575, and W578. Residues D602, I603, and E605 each contribute to the Ca(2+) site. Positions 602-637 constitute an EGF-like 6; calcium-binding domain; the sequence is DIDECGTGRHSCANDTICFNLDGGYDCRCPHGKNCT. 3 disulfide bridges follow: C606–C619, C613–C628, and C630–C636. N-linked (GlcNAc...) asparagine glycosylation occurs at N615. Residues N621, L622, and G625 each coordinate Ca(2+). N635 carries an N-linked (GlcNAc...) asparagine glycan. VWFC domains lie at 638–693 and 698–756; these read GDCI…PECD and SQCL…PRCV.

In terms of assembly, homotrimer. Binds to PRKCB. Interacts with NICOL1; this interaction triggers epididymal differentiation. Interacts (via the EGF domains) with ROBO3 (via Fibronectin type-III 1 domain) with a 3:3 stoichiometry; this interaction promotes oligomerization of ROBO3 resulting in the repulsion of commissural axons in the midline.

Its subcellular location is the secreted. Plays multiple roles in neural tissues, regulates neuronal proliferation, survival, differentiation, polarization, as well as axon guidance and synaptic functions. Plays an important role in axon development during neuronal differentiation through the MAPK intracellular signaling pathway. Via binding to its receptor ROBO3, plays a role in axon guidance, functioning as a repulsive axon guidance cue that contributes to commissural axon guidance to the midline. Required for neuron survival through the modulation of MAPK signaling pathways too. Involved in the regulation of hypothalamic GNRH secretion and the control of puberty. Functionally, epididymal-secreted protein that signals through a ROS1-pathway to regulate the epididymal initial segment (IS) maturation, sperm maturation and male fertility. This Homo sapiens (Human) protein is Protein kinase C-binding protein NELL2.